The sequence spans 1122 residues: MSGSRPTQSSEGSRRSRHSARIIAQTTVDAKLHADFEESGSSFDYSTSVRVTGPVVENQPPRSDKVTTTYLHHIQKGKLIQPFGCLLALDEKTFKVIAYSENASELLTMASHAVPSVGEHPVLGIGTDIRSLFTAPSASALQKALGFGDVSLLNPILVHCRTSAKPFYAIIHRVTGSIIIDFEPVKPYEVPMTAAGALQSYKLAAKAITRLQSLPSGSMERLCDTMVQEVFELTGYDRVMAYKFHEDDHGEVVSEVTKPGLEPYLGLHYPATDIPQAARFLFMKNKVRMIVDCNAKHARVLQDEKLSFDLTLCGSTLRAPHSCHLQYMANMDSIASLVMAVVVNEEDGEGDAPDATTQPQKRKRLWGLVVCHNTTPRFVPFPLRYACEFLAQVFAIHVNKEVELDNQMVEKNILRTQTLLCDMLMRDAPLGIVSQSPNIMDLVKCDGAALLYKDKIWKLGTTPSEFHLQEIASWLCEYHMDSTGLSTDSLHDAGFPRALSLGDSVCGMAAVRISSKDMIFWFRSHTAGEVRWGGAKHDPDDRDDARRMHPRSSFKAFLEVVKTRSLPWKDYEMDAIHSLQLILRNAFKDSETTDVNTKVIYSKLNDLKIDGIQELEAVTSEMVRLIETATVPILAVDSDGLVNGWNTKIAELTGLSVDEAIGKHFLTLVEDSSVEIVKRMLENALEGTEEQNVQFEIKTHLSRADAGPISLVVNACASRDLHENVVGVCFVAHDLTGQKTVMDKFTRIEGDYKAIIQNPNPLIPPIFGTDEFGWCTEWNPAMSKLTGLKREEVIDKMLLGEVFGTQKSCCRLKNQEAFVNLGIVLNNAVTSQDPEKVSFAFFTRGGKYVECLLCVSKKLDREGVVTGVFCFLQLASHELQQALHVQRLAERTAVKRLKALAYIKRQIRNPLSGIMFTRKMIEGTELGPEQRRILQTSALCQKQLSKILDDSDLESIIEGCLDLEMKEFTLNEVLTASTSQVMMKSNGKSVRITNETGEEVMSDTLYGDSIRLQQVLADFMLMAVNFTPSGGQLTVSASLRKDQLGRSVHLANLEIRLTHTGAGIPEFLLNQMFGTEEDVSEEGLSLMVSRKLVKLMNGDVQYLRQAGKSSFIITAELAAANK.

A compositionally biased stretch (polar residues) spans 1-11 (MSGSRPTQSSE). The tract at residues 1–21 (MSGSRPTQSSEGSRRSRHSAR) is disordered. Residues 218 to 402 (SMERLCDTMV…VFAIHVNKEV (185 aa)) form the GAF domain. C323 contributes to the phytochromobilin binding site. Positions 618-688 (VTSEMVRLIE…RMLENALEGT (71 aa)) constitute a PAS 1 domain. The 53-residue stretch at 695–747 (FEIKTHLSRADAGPISLVVNACASRDLHENVVGVCFVAHDLTGQKTVMDKFTR) folds into the PAC domain. In terms of domain architecture, PAS 2 spans 748 to 822 (IEGDYKAIIQ…KNQEAFVNLG (75 aa)). Residues 902-1119 (YIKRQIRNPL…SFIITAELAA (218 aa)) enclose the Histidine kinase domain.

It belongs to the phytochrome family. Homodimer. Interacts with NDPK2 and PKS4. Stabilized by interactions with PAPP5 and FYPP3 which are enhanced in the phosphorylated Pfr form. Interacts with COP1/SPA1 complex. Binds, via its photosensory domain, to PTAC12/HMR when photoactivated; this interaction stimulates its localization to photobodies. Interacts with FHY1, FHL and FHY3, especially upon far-red (FR) light illumination; when underphosphorylated. Forms PHYA/FHY1/HFR1 complex. Binds to PIF3/PAP3. Post-translationally, phosphorylated. In terms of processing, contains one covalently linked phytochromobilin chromophore. Expressed in fruits, flowers, leaves, stems, seedlings and roots.

It is found in the cytoplasm. It localises to the nucleus. Its subcellular location is the nucleoplasm. The protein resides in the nucleus speckle. Regulatory photoreceptor which exists in two forms that are reversibly interconvertible by light: the Pr form that absorbs maximally in the red region of the spectrum and the Pfr form that absorbs maximally in the far-red region. Photoconversion of Pr to Pfr induces an array of morphogenetic responses, whereas reconversion of Pfr to Pr cancels the induction of those responses. Pfr controls the expression of a number of nuclear genes including those encoding the small subunit of ribulose-bisphosphate carboxylase, chlorophyll A/B binding protein, protochlorophyllide reductase, rRNA, etc. It also controls the expression of its own gene(s) in a negative feedback fashion. Involved in the flowering time regulation. Can phosphorylate FHY1 and, possibly, FHL, in red light conditions; this inactivates their co-shuttling to the nucleus. Regulates phototropic responses both in the nucleus (e.g. hypocotyl elongation and cotyledon opening under high-irradiance conditions and seed germination under very-low-fluence conditions) and in the cytoplasm (e.g. negative gravitropism in blue light and red-enhanced phototropism). Promotes seed germination, suppression of hypocotyl elongation, and randomization of hypocotyl growth orientation in far-red light; these responses to far-red light are repressed by UNE10/PIF8. Stabilizes UNE10/PIF8 but sequesters PIF3/PAP3 from its target genes promoters in far-red light. The sequence is that of Phytochrome A from Arabidopsis thaliana (Mouse-ear cress).